Here is a 492-residue protein sequence, read N- to C-terminus: Malonyl-CoA decarboxylase, mitochondrial (492 aa).

Residues 1–38 constitute a mitochondrion transit peptide; the sequence is MRGLGPSLRARRLLPLRYPPRPPGPRGPRLCSGLTASA. The segment at 39–189 is alpha-helical domain; it reads MDELLRRAVP…VLKSMLSEWF (151 aa). At K58 the chain carries N6-acetyllysine. At K167 the chain carries N6-acetyllysine; alternate. K167 is subject to N6-succinyllysine; alternate. The tract at residues 190–492 is catalytic domain; it reads SSGFLNLERV…VAQFQSNSKL (303 aa). K210 is subject to N6-acetyllysine. K221 is subject to N6-succinyllysine. 298–304 serves as a coordination point for malonyl-CoA; sequence QGVELGT. Position 316 is an N6-acetyllysine (K316). S328 is a malonyl-CoA binding site. Residue S328 is the Proton acceptor of the active site. K385 carries the N6-acetyllysine; alternate modification. N6-succinyllysine; alternate is present on K385. An N6-acetyllysine modification is found at K388. H422 is a malonyl-CoA binding site. Residue H422 is the Proton donor of the active site. An N6-acetyllysine mark is found at K441 and K471. The short motif at 490–492 is the Microbody targeting signal element; that stretch reads SKL.

As to quaternary structure, homotetramer. Dimer of dimers. The two subunits within a dimer display conformational differences suggesting that at any given moment, only one of the two subunits is competent for malonyl-CoA binding and catalytic activity. Under oxidizing conditions, can form disulfide-linked homotetramers (in vitro). Associates with the peroxisomal targeting signal receptor PEX5. Acetylation at Lys-471 activates malonyl-CoA decarboxylase activity. Deacetylation at Lys-471 by SIRT4 represses activity, leading to promote lipogenesis. In terms of processing, interchain disulfide bonds may form in peroxisomes (Potential). Interchain disulfide bonds are not expected to form in the reducing environment of the cytoplasm and mitochondria. Expressed in liver, heart, skeletal muscles and adipose tissues (at protein level). Ubiquitous. Strongly expressed in liver, kidney, heart, skeletal muscle and adipose tissues. Weakly expressed in brain.

Its subcellular location is the cytoplasm. It is found in the mitochondrion matrix. The protein localises to the peroxisome. It localises to the peroxisome matrix. It catalyses the reaction malonyl-CoA + H(+) = acetyl-CoA + CO2. The protein operates within metabolic intermediate biosynthesis; acetyl-CoA biosynthesis; acetyl-CoA from malonyl-CoA: step 1/1. Malonyl-CoA decarboxylase activity does not require any cofactors or divalent metal ions. Its function is as follows. Catalyzes the conversion of malonyl-CoA to acetyl-CoA. In the fatty acid biosynthesis MCD selectively removes malonyl-CoA and thus assures that methyl-malonyl-CoA is the only chain elongating substrate for fatty acid synthase and that fatty acids with multiple methyl side chains are produced. In peroxisomes it may be involved in degrading intraperoxisomal malonyl-CoA, which is generated by the peroxisomal beta-oxidation of odd chain-length dicarboxylic fatty acids. Plays a role in the metabolic balance between glucose and lipid oxidation in muscle independent of alterations in insulin signaling. May play a role in controlling the extent of ischemic injury by promoting glucose oxidation. The sequence is that of Malonyl-CoA decarboxylase, mitochondrial from Rattus norvegicus (Rat).